Consider the following 757-residue polypeptide: RNA-directed RNA polymerase catalytic subunit (757 aa).

Positions 52–82 (KGKWTTNTETGAPQLNPIDGPLPEDNEPSGY) are disordered. Residues 55 to 64 (WTTNTETGAP) show a composition bias toward polar residues. Short sequence motifs (nuclear localization signal) lie at residues 187-195 (RKRRVRDNM) and 203-216 (RTIG…NKKS). The tract at residues 249-256 (RGFVYFVE) is promoter-binding site. The 198-residue stretch at 286–483 (VRKMMTNSQD…GINMSKKKSY (198 aa)) folds into the RdRp catalytic domain.

It belongs to the influenza viruses polymerase PB1 family. In terms of assembly, influenza RNA polymerase is composed of three subunits: PB1, PB2 and PA. Interacts (via N-terminus) with PA (via C-terminus). Interacts (via C-terminus) with PB2 (via N-terminus); this interaction is essential for transcription initiation. In terms of processing, phosphorylated by host PRKCA.

The protein resides in the host nucleus. Its subcellular location is the host cytoplasm. The catalysed reaction is RNA(n) + a ribonucleoside 5'-triphosphate = RNA(n+1) + diphosphate. Its function is as follows. RNA-dependent RNA polymerase which is responsible for replication and transcription of virus RNA segments. The transcription of viral mRNAs occurs by a unique mechanism called cap-snatching. 5' methylated caps of cellular mRNAs are cleaved after 10-13 nucleotides by PA. In turn, these short capped RNAs are used as primers by PB1 for transcription of viral mRNAs. During virus replication, PB1 initiates RNA synthesis and copy vRNA into complementary RNA (cRNA) which in turn serves as a template for the production of more vRNAs. The chain is RNA-directed RNA polymerase catalytic subunit from Aves (Cat).